Reading from the N-terminus, the 228-residue chain is Ribonuclease HII (228 aa).

One can recognise an RNase H type-2 domain in the interval 11-202; it reads GPVAGVDEAG…VVAAAQLHGM (192 aa). 3 residues coordinate a divalent metal cation: D17, E18, and D111.

This sequence belongs to the RNase HII family. Requires Mn(2+) as cofactor. The cofactor is Mg(2+).

It localises to the cytoplasm. It catalyses the reaction Endonucleolytic cleavage to 5'-phosphomonoester.. Functionally, endonuclease that specifically degrades the RNA of RNA-DNA hybrids. The chain is Ribonuclease HII from Saccharopolyspora erythraea (strain ATCC 11635 / DSM 40517 / JCM 4748 / NBRC 13426 / NCIMB 8594 / NRRL 2338).